The chain runs to 341 residues: L-threonine 3-dehydrogenase (341 aa).

Cysteine 38 lines the Zn(2+) pocket. Active-site charge relay system residues include threonine 40 and histidine 43. Positions 63, 64, 93, 96, 99, and 107 each coordinate Zn(2+). NAD(+)-binding positions include isoleucine 175, aspartate 195, arginine 200, 262–264, and 286–287; these read LGI and IY.

The protein belongs to the zinc-containing alcohol dehydrogenase family. In terms of assembly, homotetramer. The cofactor is Zn(2+).

The protein resides in the cytoplasm. It carries out the reaction L-threonine + NAD(+) = (2S)-2-amino-3-oxobutanoate + NADH + H(+). The protein operates within amino-acid degradation; L-threonine degradation via oxydo-reductase pathway; glycine from L-threonine: step 1/2. In terms of biological role, catalyzes the NAD(+)-dependent oxidation of L-threonine to 2-amino-3-ketobutyrate. The chain is L-threonine 3-dehydrogenase from Salmonella typhi.